The primary structure comprises 42 residues: Large ribosomal subunit protein bL36 (42 aa).

This sequence belongs to the bacterial ribosomal protein bL36 family.

The sequence is that of Large ribosomal subunit protein bL36 from Ehrlichia ruminantium (strain Gardel).